A 194-amino-acid chain; its full sequence is Ribosomal RNA large subunit methyltransferase E (194 aa).

S-adenosyl-L-methionine contacts are provided by Gly48, Trp50, Asp66, Asn82, and Asp110. Lys150 functions as the Proton acceptor in the catalytic mechanism.

The protein belongs to the class I-like SAM-binding methyltransferase superfamily. RNA methyltransferase RlmE family.

It localises to the cytoplasm. It catalyses the reaction uridine(2552) in 23S rRNA + S-adenosyl-L-methionine = 2'-O-methyluridine(2552) in 23S rRNA + S-adenosyl-L-homocysteine + H(+). Functionally, specifically methylates the uridine in position 2552 of 23S rRNA at the 2'-O position of the ribose in the fully assembled 50S ribosomal subunit. The sequence is that of Ribosomal RNA large subunit methyltransferase E from Picrophilus torridus (strain ATCC 700027 / DSM 9790 / JCM 10055 / NBRC 100828 / KAW 2/3).